The chain runs to 554 residues: Protein translocase subunit SecD (554 aa).

6 consecutive transmembrane segments (helical) span residues 10-30, 392-412, 414-434, 435-455, 491-511, and 516-536; these read LVIL…MFYA, AGMV…IASY, LFGF…FAVM, GAIG…TIGT, AIID…VLGA, and GFAV…IWVV.

It belongs to the SecD/SecF family. SecD subfamily. Forms a complex with SecF. Part of the essential Sec protein translocation apparatus which comprises SecA, SecYEG and auxiliary proteins SecDF-YajC and YidC.

The protein resides in the cell inner membrane. Its function is as follows. Part of the Sec protein translocase complex. Interacts with the SecYEG preprotein conducting channel. SecDF uses the proton motive force (PMF) to complete protein translocation after the ATP-dependent function of SecA. The protein is Protein translocase subunit SecD of Rhodobacter capsulatus (strain ATCC BAA-309 / NBRC 16581 / SB1003).